The sequence spans 490 residues: Alpha-galactosidase (490 aa).

Residue 4–70 (FKIAIIGAGS…LPTRVTATTD (67 aa)) coordinates NAD(+). Residue Asn-150 coordinates substrate. Position 171 (Cys-171) interacts with Mn(2+). The active-site Proton donor is the His-172. His-201 serves as a coordination point for Mn(2+). Catalysis depends on Tyr-258, which acts as the Proton acceptor.

Belongs to the glycosyl hydrolase 4 family. In terms of assembly, homodimer. Mn(2+) serves as cofactor. It depends on NAD(+) as a cofactor.

The catalysed reaction is Hydrolysis of terminal, non-reducing alpha-D-galactose residues in alpha-D-galactosides, including galactose oligosaccharides, galactomannans and galactolipids.. This Rhizobium meliloti (strain 1021) (Ensifer meliloti) protein is Alpha-galactosidase (melA).